Reading from the N-terminus, the 351-residue chain is tRNA (guanine(26)-N(2))-dimethyltransferase (351 aa).

In terms of domain architecture, Trm1 methyltransferase spans 4–350 (VLRREGAVQF…AGYGEVKRAL (347 aa)). The S-adenosyl-L-methionine site is built by Arg39, Arg65, Asp83, Asp109, and Ala110.

This sequence belongs to the class I-like SAM-binding methyltransferase superfamily. Trm1 family.

It catalyses the reaction guanosine(26) in tRNA + 2 S-adenosyl-L-methionine = N(2)-dimethylguanosine(26) in tRNA + 2 S-adenosyl-L-homocysteine + 2 H(+). Its function is as follows. Dimethylates a single guanine residue at position 26 of a number of tRNAs using S-adenosyl-L-methionine as donor of the methyl groups. The polypeptide is tRNA (guanine(26)-N(2))-dimethyltransferase (Pyrobaculum neutrophilum (strain DSM 2338 / JCM 9278 / NBRC 100436 / V24Sta) (Thermoproteus neutrophilus)).